A 45-amino-acid polypeptide reads, in one-letter code: MEAVLLLAKLPEAFSVFSPIVDVMPVIPLFFLALAFVWQAAVGFK.

The propeptide occupies 1 to 8; that stretch reads MEAVLLLA. A helical membrane pass occupies residues 24–44; sequence MPVIPLFFLALAFVWQAAVGF.

This sequence belongs to the PsbK family. In terms of assembly, PSII is composed of 1 copy each of membrane proteins PsbA, PsbB, PsbC, PsbD, PsbE, PsbF, PsbH, PsbI, PsbJ, PsbK, PsbL, PsbM, PsbT, PsbX, PsbY, PsbZ, Psb30/Ycf12, peripheral proteins PsbO, CyanoQ (PsbQ), PsbU, PsbV and a large number of cofactors. It forms dimeric complexes.

It is found in the cellular thylakoid membrane. One of the components of the core complex of photosystem II (PSII). PSII is a light-driven water:plastoquinone oxidoreductase that uses light energy to abstract electrons from H(2)O, generating O(2) and a proton gradient subsequently used for ATP formation. It consists of a core antenna complex that captures photons, and an electron transfer chain that converts photonic excitation into a charge separation. This is Photosystem II reaction center protein K from Acaryochloris marina (strain MBIC 11017).